The chain runs to 635 residues: Threonine--tRNA ligase (635 aa).

A TGS domain is found at 1–61; sequence MVSIRLPDGS…DRDASLAIVT (61 aa). A catalytic region spans residues 242-533; sequence DHRKLGKQLD…LIEHHAGAMP (292 aa). 3 residues coordinate Zn(2+): Cys333, His384, and His510.

It belongs to the class-II aminoacyl-tRNA synthetase family. In terms of assembly, homodimer. Zn(2+) is required as a cofactor.

The protein localises to the cytoplasm. It carries out the reaction tRNA(Thr) + L-threonine + ATP = L-threonyl-tRNA(Thr) + AMP + diphosphate + H(+). Catalyzes the attachment of threonine to tRNA(Thr) in a two-step reaction: L-threonine is first activated by ATP to form Thr-AMP and then transferred to the acceptor end of tRNA(Thr). Also edits incorrectly charged L-seryl-tRNA(Thr). This is Threonine--tRNA ligase from Burkholderia cenocepacia (strain ATCC BAA-245 / DSM 16553 / LMG 16656 / NCTC 13227 / J2315 / CF5610) (Burkholderia cepacia (strain J2315)).